The chain runs to 274 residues: Large ribosomal subunit protein uL2c (274 aa).

The interval histidine 230–lysine 252 is disordered.

The protein belongs to the universal ribosomal protein uL2 family. Part of the 50S ribosomal subunit.

The protein resides in the plastid. This is Large ribosomal subunit protein uL2c (rpl2) from Euglena longa (Euglenophycean alga).